The sequence spans 319 residues: Acetyl-coenzyme A carboxylase carboxyl transferase subunit alpha (319 aa).

Residues 39–293 (RLQKKSNDLT…KAVLEKQLHE (255 aa)) enclose the CoA carboxyltransferase C-terminal domain.

Belongs to the AccA family. Acetyl-CoA carboxylase is a heterohexamer composed of biotin carboxyl carrier protein (AccB), biotin carboxylase (AccC) and two subunits each of ACCase subunit alpha (AccA) and ACCase subunit beta (AccD).

The protein resides in the cytoplasm. It carries out the reaction N(6)-carboxybiotinyl-L-lysyl-[protein] + acetyl-CoA = N(6)-biotinyl-L-lysyl-[protein] + malonyl-CoA. Its pathway is lipid metabolism; malonyl-CoA biosynthesis; malonyl-CoA from acetyl-CoA: step 1/1. Component of the acetyl coenzyme A carboxylase (ACC) complex. First, biotin carboxylase catalyzes the carboxylation of biotin on its carrier protein (BCCP) and then the CO(2) group is transferred by the carboxyltransferase to acetyl-CoA to form malonyl-CoA. The chain is Acetyl-coenzyme A carboxylase carboxyl transferase subunit alpha from Neisseria meningitidis serogroup C / serotype 2a (strain ATCC 700532 / DSM 15464 / FAM18).